The primary structure comprises 124 residues: Fluoride-specific ion channel FluC (124 aa).

4 helical membrane passes run Leu4–Phe24, Phe35–Gly55, Ile60–Ser80, and Val102–Ser122. Residues Gly74 and Thr77 each contribute to the Na(+) site.

This sequence belongs to the fluoride channel Fluc/FEX (TC 1.A.43) family.

Its subcellular location is the cell inner membrane. It carries out the reaction fluoride(in) = fluoride(out). Its activity is regulated as follows. Na(+) is not transported, but it plays an essential structural role and its presence is essential for fluoride channel function. Functionally, fluoride-specific ion channel. Important for reducing fluoride concentration in the cell, thus reducing its toxicity. This is Fluoride-specific ion channel FluC from Shewanella baltica (strain OS185).